We begin with the raw amino-acid sequence, 462 residues long: RuvB-like 2 (462 aa).

Position 76–83 (76–83 (GQPGTGKT)) interacts with ATP.

It belongs to the RuvB family. As to quaternary structure, forms homohexameric rings. Can form a dodecamer with ruvbl2 made of two stacked hexameric rings. Is a component of the RNA polymerase II holoenzyme complex. Component of the chromatin-remodeling Ino80 complex. Component of some MLL1/MLL complex.

It is found in the nucleus. It localises to the dynein axonemal particle. It carries out the reaction ATP + H2O = ADP + phosphate + H(+). In terms of biological role, has single-stranded DNA-stimulated ATPase and ATP-dependent DNA helicase (5' to 3') activity suggesting a role in nuclear processes such as recombination and transcription. Proposed core component of the chromatin remodeling INO80 complex which exhibits DNA- and nucleosome-activated ATPase activity and catalyzes ATP-dependent nucleosome sliding. Involved in the endoplasmic reticulum (ER)-associated degradation (ERAD) pathway where it negatively regulates expression of ER stress response genes. The polypeptide is RuvB-like 2 (ruvbl2) (Xenopus laevis (African clawed frog)).